The primary structure comprises 345 residues: Protein-glutamate methylesterase/protein-glutamine glutaminase 1 (345 aa).

The Response regulatory domain occupies Ser8–Glu123. Asp59 bears the 4-aspartylphosphate mark. The CheB-type methylesterase domain maps to Ala151–Arg344. Residues Ser163, His190, and Asp286 contribute to the active site.

This sequence belongs to the CheB family. Post-translationally, phosphorylated by CheA. Phosphorylation of the N-terminal regulatory domain activates the methylesterase activity.

The protein resides in the cytoplasm. It catalyses the reaction [protein]-L-glutamate 5-O-methyl ester + H2O = L-glutamyl-[protein] + methanol + H(+). The catalysed reaction is L-glutaminyl-[protein] + H2O = L-glutamyl-[protein] + NH4(+). Functionally, involved in chemotaxis. Part of a chemotaxis signal transduction system that modulates chemotaxis in response to various stimuli. Catalyzes the demethylation of specific methylglutamate residues introduced into the chemoreceptors (methyl-accepting chemotaxis proteins or MCP) by CheR. Also mediates the irreversible deamidation of specific glutamine residues to glutamic acid. In Myxococcus xanthus (strain DK1622), this protein is Protein-glutamate methylesterase/protein-glutamine glutaminase 1.